Consider the following 187-residue polypeptide: Nuclear transcription factor Y subunit C-8 (187 aa).

The interval 163 to 187 (WPGAWTSVSGEEEEARGKKGGDDGN) is disordered. A compositionally biased stretch (basic and acidic residues) spans 177 to 187 (ARGKKGGDDGN).

The protein belongs to the NFYC/HAP5 subunit family. In terms of assembly, heterotrimeric transcription factor composed of three components, NF-YA, NF-YB and NF-YC. NF-YB and NF-YC must interact and dimerize for NF-YA association and DNA binding. Expressed in flowers and siliques.

It localises to the nucleus. Functionally, stimulates the transcription of various genes by recognizing and binding to a CCAAT motif in promoters. This Arabidopsis thaliana (Mouse-ear cress) protein is Nuclear transcription factor Y subunit C-8 (NFYC8).